The sequence spans 688 residues: Sodium channel and clathrin linker 1 (688 aa).

Alanine 2 carries the post-translational modification N-acetylalanine. A coiled-coil region spans residues glutamate 69–threonine 673. Serine 681 carries the post-translational modification Phosphoserine.

In terms of assembly, interacts with SCN10A and clathrin. Identified in a complex containing SCN10A, clathrin and SCLT1.

It localises to the cytoplasm. Its subcellular location is the cytoskeleton. It is found in the microtubule organizing center. The protein resides in the centrosome. The protein localises to the centriole. Its function is as follows. Adapter protein that links SCN10A to clathrin. Regulates SCN10A channel activity, possibly by promoting channel internalization. In Homo sapiens (Human), this protein is Sodium channel and clathrin linker 1 (SCLT1).